A 210-amino-acid polypeptide reads, in one-letter code: TM2 domain-containing protein C02F5.13 (210 aa).

Residues 1–18 (MRRLPWLIPFFLVNISNG) form the signal peptide. Residues 19 to 138 (NNEFRIEFEY…PRTFTKSTPC (120 aa)) lie on the Extracellular side of the membrane. An N-linked (GlcNAc...) asparagine glycan is attached at N91. Residues 139–159 (IIYNGHYFLTTLLYSIFLGVV) form a helical membrane-spanning segment. A TM2 domain is found at 143-191 (GHYFLTTLLYSIFLGVVAVDRFCLGYSAMAVGKLMTLGGFGIWWIVDIF). At 160-178 (AVDRFCLGYSAMAVGKLMT) the chain is on the cytoplasmic side. The chain crosses the membrane as a helical span at residues 179 to 199 (LGGFGIWWIVDIFLLVLGVLG). The Extracellular segment spans residues 200 to 210 (PADDSSWEPYY).

The protein belongs to the TM2 family.

It is found in the membrane. The protein is TM2 domain-containing protein C02F5.13 of Caenorhabditis elegans.